Reading from the N-terminus, the 129-residue chain is Large ribosomal subunit protein bL19 (129 aa).

It belongs to the bacterial ribosomal protein bL19 family.

Its function is as follows. This protein is located at the 30S-50S ribosomal subunit interface and may play a role in the structure and function of the aminoacyl-tRNA binding site. The chain is Large ribosomal subunit protein bL19 from Bordetella avium (strain 197N).